Here is a 164-residue protein sequence, read N- to C-terminus: Large ribosomal subunit protein bL21 (164 aa).

The segment at 105 to 164 is disordered; it reads KAPTIGPRAKKEKKVEAAPADGEAPAKKAPAKKAAAKKAAPKAAAKKAPAKKAAPKAKSE. The segment covering 133 to 164 has biased composition (basic residues); sequence APAKKAAAKKAAPKAAAKKAPAKKAAPKAKSE.

Belongs to the bacterial ribosomal protein bL21 family. As to quaternary structure, part of the 50S ribosomal subunit. Contacts protein L20.

In terms of biological role, this protein binds to 23S rRNA in the presence of protein L20. In Afipia carboxidovorans (strain ATCC 49405 / DSM 1227 / KCTC 32145 / OM5) (Oligotropha carboxidovorans), this protein is Large ribosomal subunit protein bL21.